A 329-amino-acid polypeptide reads, in one-letter code: Holliday junction branch migration complex subunit RuvB (329 aa).

The interval 1–180 is large ATPase domain (RuvB-L); the sequence is MKNILQSTEC…FGIPIHLEFY (180 aa). ATP contacts are provided by residues Arg-20, Gly-61, Lys-64, Thr-65, Thr-66, 127–129, Arg-170, Tyr-180, and Arg-217; that span reads EDF. Residue Thr-65 participates in Mg(2+) binding. Positions 181 to 252 are small ATPAse domain (RuvB-S); sequence STEELTKVIQ…FADKALLRLG (72 aa). The interval 255-329 is head domain (RuvB-H); that stretch reads KLGLDRQDIQ…ISHLREQEYI (75 aa). DNA contacts are provided by Arg-308 and Arg-313.

Belongs to the RuvB family. As to quaternary structure, homohexamer. Forms an RuvA(8)-RuvB(12)-Holliday junction (HJ) complex. HJ DNA is sandwiched between 2 RuvA tetramers; dsDNA enters through RuvA and exits via RuvB. An RuvB hexamer assembles on each DNA strand where it exits the tetramer. Each RuvB hexamer is contacted by two RuvA subunits (via domain III) on 2 adjacent RuvB subunits; this complex drives branch migration. In the full resolvosome a probable DNA-RuvA(4)-RuvB(12)-RuvC(2) complex forms which resolves the HJ.

The protein localises to the cytoplasm. The catalysed reaction is ATP + H2O = ADP + phosphate + H(+). Functionally, the RuvA-RuvB-RuvC complex processes Holliday junction (HJ) DNA during genetic recombination and DNA repair, while the RuvA-RuvB complex plays an important role in the rescue of blocked DNA replication forks via replication fork reversal (RFR). RuvA specifically binds to HJ cruciform DNA, conferring on it an open structure. The RuvB hexamer acts as an ATP-dependent pump, pulling dsDNA into and through the RuvAB complex. RuvB forms 2 homohexamers on either side of HJ DNA bound by 1 or 2 RuvA tetramers; 4 subunits per hexamer contact DNA at a time. Coordinated motions by a converter formed by DNA-disengaged RuvB subunits stimulates ATP hydrolysis and nucleotide exchange. Immobilization of the converter enables RuvB to convert the ATP-contained energy into a lever motion, pulling 2 nucleotides of DNA out of the RuvA tetramer per ATP hydrolyzed, thus driving DNA branch migration. The RuvB motors rotate together with the DNA substrate, which together with the progressing nucleotide cycle form the mechanistic basis for DNA recombination by continuous HJ branch migration. Branch migration allows RuvC to scan DNA until it finds its consensus sequence, where it cleaves and resolves cruciform DNA. This Ehrlichia chaffeensis (strain ATCC CRL-10679 / Arkansas) protein is Holliday junction branch migration complex subunit RuvB.